The following is a 926-amino-acid chain: Serine/threonine-protein kinase pakE (926 aa).

A compositionally biased stretch (polar residues) spans 36-55 (SSRELPTQDSSTKTSNITTP). Disordered stretches follow at residues 36 to 257 (SSRE…RPKL) and 546 to 576 (QLNN…TTTT). Residues 56–107 (NNNNNNNNNNNNNNNNNNNNNNNNNNNNNNNNNNNNNNNNNNNNNNNNNNNN) show a composition bias toward low complexity. Residues 108–117 (TPTSLNSSWK) are compositionally biased toward polar residues. Over residues 134–173 (NNNNNVGSPNNQSTSQTNHQQPPPQQLQQQQSLSSTSTPS) the composition is skewed to low complexity. Over residues 183-204 (RRNVTSPNLTRSDPTVPITNSR) the composition is skewed to polar residues. Residues 215–253 (PQFQLNNLNFDDNNDHSTTTTNNNNNNNNNNSNNNNNNN) are compositionally biased toward low complexity. Residues 534-567 (LDFEKELKENQQQLNNNNNNNNNNNNNNNNNNNN) adopt a coiled-coil conformation. Positions 650–903 (FEFKEKLGQG…VIDLLSHDFI (254 aa)) constitute a Protein kinase domain. ATP contacts are provided by residues 656-664 (LGQGGYGAV) and Lys679. Asp771 (proton acceptor) is an active-site residue.

It belongs to the protein kinase superfamily. STE Ser/Thr protein kinase family. STE20 subfamily. Mg(2+) serves as cofactor.

It carries out the reaction L-seryl-[protein] + ATP = O-phospho-L-seryl-[protein] + ADP + H(+). It catalyses the reaction L-threonyl-[protein] + ATP = O-phospho-L-threonyl-[protein] + ADP + H(+). May play a role in responding to changes in chemoattractant levels. The chain is Serine/threonine-protein kinase pakE from Dictyostelium discoideum (Social amoeba).